A 474-amino-acid chain; its full sequence is E3 ubiquitin-protein ligase RNF14 (474 aa).

The 127-residue stretch at D11–Y137 folds into the RWD domain. The D-box motif lies at R37–N45. Positions K216 to L457 are TRIAD supradomain. Residues C220, C223, C238, H240, C243, C246, C265, C270, C309, C314, C329, C332, C337, C340, and H345 each contribute to the Zn(2+) site. An RING-type 1 zinc finger spans residues C220–C270. Residues A289–C350 form an IBR-type zinc finger. Phosphoserine is present on S348. C350 contacts Zn(2+). A coiled-coil region spans residues K351–E395. The segment at R361–D474 is interaction with androgen receptor. Residues C404 and C407 each contribute to the Zn(2+) site. Residues C404–C433 form an RING-type 2; atypical zinc finger. Residue C417 is part of the active site. Residues C422, C425, C430, C433, H445, and C453 each coordinate Zn(2+).

Belongs to the RBR family. RNF14 subfamily. Interacts with GCN1; interaction takes place in response to ribosome collisions and is required for ubiquitination of EEF1A1/eEF1A. Interacts with the ubiquitin-conjugating enzymes UBE2E1 and UBE2E2. Interacts with AR/androgen receptor. Interacts with TCF7/TCF1, TCF7L1/TCF3 and TCF7L2/TCF4; promoting Wnt signaling. In terms of processing, RING-type zinc finger-dependent and UBE2E2-dependent autoubiquitination. In terms of tissue distribution, widely expressed.

The protein localises to the cytoplasm. It localises to the nucleus. The catalysed reaction is [E2 ubiquitin-conjugating enzyme]-S-ubiquitinyl-L-cysteine + [acceptor protein]-L-lysine = [E2 ubiquitin-conjugating enzyme]-L-cysteine + [acceptor protein]-N(6)-ubiquitinyl-L-lysine.. It participates in protein modification; protein ubiquitination. Its function is as follows. E3 ubiquitin-protein ligase that plays a key role in the RNF14-RNF25 translation quality control pathway, a pathway that takes place when a ribosome has stalled during translation, and which promotes ubiquitination and degradation of translation factors on stalled ribosomes. Recruited to stalled ribosomes by the ribosome collision sensor GCN1 and mediates 'Lys-6'-linked ubiquitination of target proteins, leading to their degradation. Mediates ubiquitination of EEF1A1/eEF1A and ETF1/eRF1 translation factors on stalled ribosomes, leading to their degradation. Also catalyzes ubiquitination of ribosomal proteins RPL0, RPL1, RPL12, RPS13 and RPS17. Specifically required to resolve RNA-protein cross-links caused by reactive aldehydes, which trigger translation stress by stalling ribosomes: acts by catalying 'Lys-6'-linked ubiquitination of RNA-protein cross-links, leading to their removal by the ATP-dependent unfoldase VCP and subsequent degradation by the proteasome. Independently of its function in the response to stalled ribosomes, acts as a regulator of transcription in Wnt signaling via its interaction with TCF transcription factors (TCF7/TCF1, TCF7L1/TCF3 and TCF7L2/TCF4). May also play a role as a coactivator for androgen- and, to a lesser extent, progesterone-dependent transcription. The sequence is that of E3 ubiquitin-protein ligase RNF14 from Homo sapiens (Human).